We begin with the raw amino-acid sequence, 247 residues long: Pyridoxine 5'-phosphate synthase (247 aa).

Asn-12 lines the 3-amino-2-oxopropyl phosphate pocket. 14–15 (DH) contacts 1-deoxy-D-xylulose 5-phosphate. Arg-23 contributes to the 3-amino-2-oxopropyl phosphate binding site. His-48 functions as the Proton acceptor in the catalytic mechanism. Positions 50 and 55 each coordinate 1-deoxy-D-xylulose 5-phosphate. The Proton acceptor role is filled by Glu-75. Thr-105 contributes to the 1-deoxy-D-xylulose 5-phosphate binding site. His-196 serves as the catalytic Proton donor. Residues Gly-197 and 218 to 219 (GH) each bind 3-amino-2-oxopropyl phosphate.

The protein belongs to the PNP synthase family. Homooctamer; tetramer of dimers.

The protein localises to the cytoplasm. The enzyme catalyses 3-amino-2-oxopropyl phosphate + 1-deoxy-D-xylulose 5-phosphate = pyridoxine 5'-phosphate + phosphate + 2 H2O + H(+). Its pathway is cofactor biosynthesis; pyridoxine 5'-phosphate biosynthesis; pyridoxine 5'-phosphate from D-erythrose 4-phosphate: step 5/5. Its function is as follows. Catalyzes the complicated ring closure reaction between the two acyclic compounds 1-deoxy-D-xylulose-5-phosphate (DXP) and 3-amino-2-oxopropyl phosphate (1-amino-acetone-3-phosphate or AAP) to form pyridoxine 5'-phosphate (PNP) and inorganic phosphate. This Pseudomonas fluorescens (strain Pf0-1) protein is Pyridoxine 5'-phosphate synthase.